The following is a 175-amino-acid chain: uncharacterized protein (175 aa).

Residues 1-33 (MERLPYEIVSTIFRKAILHYVLIRGTTYPQSLA) form the signal peptide.

This is an uncharacterized protein from Methanocaldococcus jannaschii (strain ATCC 43067 / DSM 2661 / JAL-1 / JCM 10045 / NBRC 100440) (Methanococcus jannaschii).